We begin with the raw amino-acid sequence, 251 residues long: Triosephosphate isomerase (251 aa).

Residues asparagine 12 and lysine 14 each coordinate substrate. The active-site Electrophile is the histidine 96. The active-site Proton acceptor is glutamate 168.

Belongs to the triosephosphate isomerase family. Homodimer.

It is found in the cytoplasm. Its subcellular location is the glycosome. It catalyses the reaction D-glyceraldehyde 3-phosphate = dihydroxyacetone phosphate. Its pathway is carbohydrate biosynthesis; gluconeogenesis. It functions in the pathway carbohydrate degradation; glycolysis; D-glyceraldehyde 3-phosphate from glycerone phosphate: step 1/1. This Leishmania mexicana protein is Triosephosphate isomerase.